A 170-amino-acid chain; its full sequence is CDP-archaeol synthase (170 aa).

The next 5 helical transmembrane spans lie at 9–29, 53–73, 79–99, 114–134, and 140–160; these read AFWY…LGGG, GFFG…FLLP, LGIA…GDLI, PAVG…AYPV, and GEVL…NIFA.

The protein belongs to the CDP-archaeol synthase family. The cofactor is Mg(2+).

The protein resides in the cell membrane. It catalyses the reaction 2,3-bis-O-(geranylgeranyl)-sn-glycerol 1-phosphate + CTP + H(+) = CDP-2,3-bis-O-(geranylgeranyl)-sn-glycerol + diphosphate. The protein operates within membrane lipid metabolism; glycerophospholipid metabolism. Catalyzes the formation of CDP-2,3-bis-(O-geranylgeranyl)-sn-glycerol (CDP-archaeol) from 2,3-bis-(O-geranylgeranyl)-sn-glycerol 1-phosphate (DGGGP) and CTP. This reaction is the third ether-bond-formation step in the biosynthesis of archaeal membrane lipids. In Pyrococcus horikoshii (strain ATCC 700860 / DSM 12428 / JCM 9974 / NBRC 100139 / OT-3), this protein is CDP-archaeol synthase.